We begin with the raw amino-acid sequence, 490 residues long: Cytochrome P450 90D2 (490 aa).

The chain crosses the membrane as a helical span at residues 4–24 (AAAGWAAPAFAVAAVVIWVVL). C437 provides a ligand contact to heme.

This sequence belongs to the cytochrome P450 family. Heme serves as cofactor. Expressed at low levels leaf blades, shoot apex and elongating stem.

The protein resides in the membrane. The catalysed reaction is 6-deoxoteasterone + reduced [NADPH--hemoprotein reductase] + O2 = 3-dehydro-6-deoxoteasterone + oxidized [NADPH--hemoprotein reductase] + 2 H2O + H(+). Its pathway is plant hormone biosynthesis; brassinosteroid biosynthesis. Catalyzes the C6-oxidation step in brassinosteroids biosynthesis. May convert 6-deoxoteasterone (6-deoxoTE) to 3-dehydro-6-deoxoteasterone (6-deoxo3DT, 6-deoxo3DHT), and teasterone (TE) to 3-dehydroteasterone (3DT, 3-DHT). Involved in the elongation of leaf sheaths and stems. This Oryza sativa subsp. japonica (Rice) protein is Cytochrome P450 90D2.